Consider the following 54-residue polypeptide: Large ribosomal subunit protein bL32c (54 aa).

The span at Met-1–Ala-25 shows a compositional bias: basic residues. Residues Met-1–Lys-26 form a disordered region.

The protein belongs to the bacterial ribosomal protein bL32 family.

Its subcellular location is the plastid. It localises to the chloroplast. This chain is Large ribosomal subunit protein bL32c, found in Thalassiosira pseudonana (Marine diatom).